A 423-amino-acid chain; its full sequence is Imidazolonepropionase (423 aa).

Fe(3+) contacts are provided by His78 and His80. Zn(2+)-binding residues include His78 and His80. 4-imidazolone-5-propanoate-binding residues include Arg87, Tyr150, and His183. Tyr150 is a binding site for N-formimidoyl-L-glutamate. Fe(3+) is bound at residue His247. His247 is a Zn(2+) binding site. Glu250 lines the 4-imidazolone-5-propanoate pocket. Asp322 serves as a coordination point for Fe(3+). Residue Asp322 coordinates Zn(2+). N-formimidoyl-L-glutamate-binding residues include Asn324 and Gly326. Ser327 provides a ligand contact to 4-imidazolone-5-propanoate.

This sequence belongs to the metallo-dependent hydrolases superfamily. HutI family. Zn(2+) is required as a cofactor. The cofactor is Fe(3+).

It is found in the cytoplasm. The catalysed reaction is 4-imidazolone-5-propanoate + H2O = N-formimidoyl-L-glutamate. Its pathway is amino-acid degradation; L-histidine degradation into L-glutamate; N-formimidoyl-L-glutamate from L-histidine: step 3/3. Its function is as follows. Catalyzes the hydrolytic cleavage of the carbon-nitrogen bond in imidazolone-5-propanoate to yield N-formimidoyl-L-glutamate. It is the third step in the universal histidine degradation pathway. This Bacillus mycoides (strain KBAB4) (Bacillus weihenstephanensis) protein is Imidazolonepropionase.